Consider the following 138-residue polypeptide: Large ribosomal subunit protein uL16 (138 aa).

The span at 1-13 (MLQPARRKYRKEQ) shows a compositional bias: basic residues. The segment at 1-22 (MLQPARRKYRKEQKGRNTGVAT) is disordered.

The protein belongs to the universal ribosomal protein uL16 family. In terms of assembly, part of the 50S ribosomal subunit.

Functionally, binds 23S rRNA and is also seen to make contacts with the A and possibly P site tRNAs. The chain is Large ribosomal subunit protein uL16 from Paracidovorax citrulli (strain AAC00-1) (Acidovorax citrulli).